The sequence spans 207 residues: Large ribosomal subunit protein uL4 (207 aa).

The tract at residues 49–78 (HAVKNRSAVSGGGRKPWRQKGTGRARQGSI) is disordered.

The protein belongs to the universal ribosomal protein uL4 family. Part of the 50S ribosomal subunit.

One of the primary rRNA binding proteins, this protein initially binds near the 5'-end of the 23S rRNA. It is important during the early stages of 50S assembly. It makes multiple contacts with different domains of the 23S rRNA in the assembled 50S subunit and ribosome. In terms of biological role, forms part of the polypeptide exit tunnel. The protein is Large ribosomal subunit protein uL4 of Streptococcus suis (strain 98HAH33).